The primary structure comprises 234 residues: Glucosamine-6-phosphate deaminase (234 aa).

Asp62 functions as the Proton acceptor; for enolization step in the catalytic mechanism. Asn128 (for ring-opening step) is an active-site residue. The Proton acceptor; for ring-opening step role is filled by His130. Glu135 serves as the catalytic For ring-opening step.

It belongs to the glucosamine/galactosamine-6-phosphate isomerase family. NagB subfamily.

The enzyme catalyses alpha-D-glucosamine 6-phosphate + H2O = beta-D-fructose 6-phosphate + NH4(+). It functions in the pathway amino-sugar metabolism; N-acetylneuraminate degradation; D-fructose 6-phosphate from N-acetylneuraminate: step 5/5. In terms of biological role, catalyzes the reversible isomerization-deamination of glucosamine 6-phosphate (GlcN6P) to form fructose 6-phosphate (Fru6P) and ammonium ion. In Streptococcus equi subsp. zooepidemicus (strain MGCS10565), this protein is Glucosamine-6-phosphate deaminase.